The primary structure comprises 72 residues: UPF0270 protein KPN78578_37030 (72 aa).

It belongs to the UPF0270 family.

In Klebsiella pneumoniae subsp. pneumoniae (strain ATCC 700721 / MGH 78578), this protein is UPF0270 protein KPN78578_37030.